The chain runs to 630 residues: Golgin subfamily A member 8K (630 aa).

The disordered stretch occupies residues 1–76; it reads MAEETQHNKL…TSSATLKDLE (76 aa). Coiled-coil stretches lie at residues 86–148 and 224–411; these read LDSR…LNTD and LTQL…QQNQ. A compositionally biased stretch (basic and acidic residues) spans 352-362; it reads KQEERIQEQHK. Disordered regions lie at residues 352-379 and 424-444; these read KQEE…EPNN and GEGH…PMPS.

This sequence belongs to the GOLGA8 family.

The chain is Golgin subfamily A member 8K from Homo sapiens (Human).